The sequence spans 1114 residues: MGVQGFQDYIEKHCPSAVVPVELQKLARGSLVGGGRQRPPHTPLRLLVDADNCLHRLYGGFYTDWVSGGQWNHMLGYLAALAKACFGGNIELFVFFNGALEKARLHEWVKRQGNERQTAQQIVSHVQNKGTPPPKVWFLPPVCMAHCIRLALIRFHVKVAQSIEDHHQEVIGFCRENGFHGLVAYDSDYALCNIPYYFSAHALKLSRNGKSLTTSQYLMHEVAKQLDLNPNRFPIFAALLGNHILPDEDLASFHWSLLGPEHPLASLKVRAHQLVLPPCDVVIKAVADYVRNIQDTSDLDAIAKDVFQHSQSRTDDKVIRFKRAIGYYSATSKPMAFHPPHYLARPNPFGMPGIVPPYVPPQMLNIPQTSLQAKPVAPQVPSPGAPGQGPHPYNLAEPALTLETSGKNLTEQNYSNIPHEGKHTPLYERSSPINPAPSGSPNHVDSAYFPGSSTSSSSDNDEGSGGAANHISGNKIGWEKTGSHSEPQARGDPGDQTKAEGSSTASSGSQLAEGKGNQIGTVQPIPCLLSMPTRNHMDITTPPLPPVAPEVLRVAEHRHKKGLMYPYIFHVLTKGEIKIAVSIEDEASKDLPPAALLYRPVRQYVYGVLFSLAESRKKTERLAFRKNRLPPEFSPVIIKEWAAYKGKSPQTPELVEALAFREWTCPNLKRLWLGKAVEDKNRRMRAFLACMRSDTPAMLNPASVPTHLTVLCCVLRYMVQWPGARILRRQELDAFLAQALSPKLYEPDQLQELKIENLDPRGIQLSALFMSGVDMALFANDACGQPVPWEHCCPWMYFDGKLFQSKLLKASREKTPLIDLCDGQAEQAAKVEKMRQSILEGLNFSRQSHPLPFPPPAALPFYPTSVYPRHFGPVPPAQGRGRGFAGVCGFGSPYGETVATGAYRAFRVATATGHCGAFSGSDSSRTSKSQGGIQPIPSQGGKLEIAGTVVGHWAGSRRGRGGRGPFPLQVVSVGGPARGRPRGVISTPVIRTFGRGGRYYGRGYKNQGAIQGKPPYAASAEEVAKELKSRSGESKSSAMSSDGSLAENGVVAEEKPAPQMNGSAGDTRAPSHSESALNNDSKTCNTNPHLNALSTDSGCRRADALEAAVLKKEE.

An interaction with YES1, SRC and FYN region spans residues 339–402 (PPHYLARPNP…YNLAEPALTL (64 aa)). 2 disordered regions span residues 372–396 (QAKP…YNLA) and 411–519 (EQNY…GNQI). Residues 431 to 443 (SPINPAPSGSPNH) are compositionally biased toward polar residues. Positions 477-498 (GWEKTGSHSEPQARGDPGDQTK) are enriched in basic and acidic residues. Residues 499–510 (AEGSSTASSGSQ) are compositionally biased toward polar residues. Thr651 is modified (phosphothreonine). An RNA binding region spans residues 825 to 1114 (AEQAAKVEKM…LEAAVLKKEE (290 aa)). An omega-N-methylarginine mark is found at Arg869, Arg880, and Arg882. The interval 918–940 (FSGSDSSRTSKSQGGIQPIPSQG) is disordered. An N6-acetyllysine modification is found at Lys928. The span at 929 to 940 (SQGGIQPIPSQG) shows a compositional bias: low complexity. Ser956 carries the phosphoserine modification. Omega-N-methylarginine occurs at positions 978 and 982. Residues 1009–1099 (AIQGKPPYAA…LNALSTDSGC (91 aa)) are disordered. The residue at position 1019 (Ser1019) is a Phosphoserine. The segment covering 1022 to 1033 (EVAKELKSRSGE) has biased composition (basic and acidic residues). Positions 1034 to 1043 (SKSSAMSSDG) are enriched in polar residues. Phosphoserine is present on residues Ser1040, Ser1041, and Ser1044. Residues 1060-1097 (MNGSAGDTRAPSHSESALNNDSKTCNTNPHLNALSTDS) are compositionally biased toward polar residues.

This sequence belongs to the constitutive coactivator of PPAR-gamma family. Interacts with PURA. Interacts with YES1, SRC, FYN. Upon tyrosine phosphorylation, interacts with PIK3R1. In terms of processing, arg-978 is dimethylated, probably to asymmetric dimethylarginine. Post-translationally, phosphorylated on tyrosine by src family kinases upon ultraviolet exposure.

Its subcellular location is the cytoplasm. The protein localises to the cell membrane. Component of the oxidative stress-induced survival signaling. May regulate the activation of SRC family protein kinases. May act as a scaffolding protein enabling SRC family protein kinases to phosphorylate and activate PI3-kinase. Binds IGF2 RNA and promotes the production of IGF2 protein. The protein is Constitutive coactivator of PPAR-gamma-like protein 1 (FAM120A) of Bos taurus (Bovine).